The chain runs to 486 residues: Hydrogenobyrinate a,c-diamide synthase (486 aa).

Residues Ser-254–Leu-272 are compositionally biased toward pro residues. A disordered region spans residues Ser-254–Asp-284. The GATase cobBQ-type domain occupies Arg-289–Gly-474. Residue Cys-372 is the Nucleophile of the active site.

The protein belongs to the CobB/CbiA family. Requires Mg(2+) as cofactor.

The enzyme catalyses hydrogenobyrinate + 2 L-glutamine + 2 ATP + 2 H2O = hydrogenobyrinate a,c-diamide + 2 L-glutamate + 2 ADP + 2 phosphate + 2 H(+). It participates in cofactor biosynthesis; adenosylcobalamin biosynthesis; cob(II)yrinate a,c-diamide from precorrin-2 (aerobic route): step 9/10. Its function is as follows. Catalyzes the ATP-dependent amidation of the two carboxylate groups at positions a and c of hydrogenobyrinate, using either L-glutamine or ammonia as the nitrogen source. This chain is Hydrogenobyrinate a,c-diamide synthase, found in Streptomyces coelicolor (strain ATCC BAA-471 / A3(2) / M145).